The primary structure comprises 298 residues: ATP synthase gamma chain (298 aa).

It belongs to the ATPase gamma chain family. As to quaternary structure, F-type ATPases have 2 components, CF(1) - the catalytic core - and CF(0) - the membrane proton channel. CF(1) has five subunits: alpha(3), beta(3), gamma(1), delta(1), epsilon(1). CF(0) has three main subunits: a, b and c.

The protein resides in the cell membrane. Functionally, produces ATP from ADP in the presence of a proton gradient across the membrane. The gamma chain is believed to be important in regulating ATPase activity and the flow of protons through the CF(0) complex. The chain is ATP synthase gamma chain from Mycobacterium leprae (strain Br4923).